The chain runs to 469 residues: Cytosolic beta-glucosidase (469 aa).

Gln-17, His-120, and Asn-164 together coordinate substrate. Glu-165 acts as the Proton donor in catalysis. A substrate-binding site is contributed by Tyr-309. The Nucleophile role is filled by Glu-373. Substrate contacts are provided by residues Trp-417 and 424-425; that span reads EW.

The protein belongs to the glycosyl hydrolase 1 family. Klotho subfamily. In terms of processing, the N-terminus is blocked. In terms of tissue distribution, present in hepatocytes (at protein level).

It localises to the cytoplasm. It is found in the cytosol. The enzyme catalyses Hydrolysis of terminal, non-reducing beta-D-glucosyl residues with release of beta-D-glucose.. It catalyses the reaction a beta-D-glucosyl-(1&lt;-&gt;1')-N-acylsphing-4-enine + H2O = an N-acylsphing-4-enine + D-glucose. It carries out the reaction a beta-D-galactosyl-(1&lt;-&gt;1')-N-acylsphing-4-enine + H2O = an N-acylsphing-4-enine + D-galactose. The catalysed reaction is beta-D-glucosyl-(1&lt;-&gt;1)-sphing-4-enine + H2O = sphing-4-enine + D-glucose. The enzyme catalyses beta-D-glucosyl-(1&lt;-&gt;1)-N-octadecanoylsphing-4-enine + H2O = N-octadecanoylsphing-4-enine + D-glucose. It catalyses the reaction beta-D-galactosyl-(1&lt;-&gt;1)-sphing-4-enine + H2O = sphing-4-enine + D-galactose. It carries out the reaction beta-D-galactosyl-(1&lt;-&gt;1')-N-octadecanoylsphing-4-enine + H2O = N-octadecanoylsphing-4-enine + D-galactose. The catalysed reaction is a beta-D-xylosyl-(1&lt;-&gt;1')-N-acylsphing-4-enine + cholesterol = cholesteryl 3-beta-D-xyloside + an N-acylsphing-4-enine. Inhibited by 2,4-dinitrophenyl-2-fluoro-2-deoxy-beta-D-glucopyranoside. In terms of biological role, neutral cytosolic beta-glycosidase with a broad substrate specificity that could play a role in the catabolism of glycosylceramides. Has a significant glucosylceramidase activity in vitro. However, that activity is relatively low and its significance in vivo is not clear. Hydrolyzes galactosylceramide/GalCer, glucosylsphingosine/GlcSph and galactosylsphingosine/GalSph. However, the in vivo relevance of these activities is unclear. It can also hydrolyze a broad variety of dietary glycosides including phytoestrogens, flavonols, flavones, flavanones and cyanogens in vitro and could therefore play a role in the metabolism of xenobiotics. Possesses transxylosylase activity in vitro using xylosylated ceramides/XylCers (such as beta-D-xylosyl-(1&lt;-&gt;1')-N-acylsphing-4-enine) as xylosyl donors and cholesterol as acceptor. Could also play a role in the catabolism of cytosolic sialyl free N-glycans. The polypeptide is Cytosolic beta-glucosidase (Cavia porcellus (Guinea pig)).